The following is a 50-amino-acid chain: Protein PsbN (50 aa).

The chain crosses the membrane as a helical span at residues 14–34; sequence IAVTILAILLALTGFGLWSAF.

This sequence belongs to the PsbN family.

Its subcellular location is the cellular thylakoid membrane. May play a role in photosystem I and II biogenesis. The sequence is that of Protein PsbN from Prochlorococcus marinus (strain MIT 9215).